The chain runs to 310 residues: Aspartate carbamoyltransferase catalytic subunit (310 aa).

Arg58 and Thr59 together coordinate carbamoyl phosphate. Lys86 provides a ligand contact to L-aspartate. Arg108, His137, and Gln140 together coordinate carbamoyl phosphate. L-aspartate is bound by residues Arg170 and Arg225. Residues Gly264 and Pro265 each contribute to the carbamoyl phosphate site.

This sequence belongs to the aspartate/ornithine carbamoyltransferase superfamily. ATCase family. In terms of assembly, heterododecamer (2C3:3R2) of six catalytic PyrB chains organized as two trimers (C3), and six regulatory PyrI chains organized as three dimers (R2).

It catalyses the reaction carbamoyl phosphate + L-aspartate = N-carbamoyl-L-aspartate + phosphate + H(+). It participates in pyrimidine metabolism; UMP biosynthesis via de novo pathway; (S)-dihydroorotate from bicarbonate: step 2/3. In terms of biological role, catalyzes the condensation of carbamoyl phosphate and aspartate to form carbamoyl aspartate and inorganic phosphate, the committed step in the de novo pyrimidine nucleotide biosynthesis pathway. The protein is Aspartate carbamoyltransferase catalytic subunit of Coxiella burnetii (strain CbuK_Q154) (Coxiella burnetii (strain Q154)).